A 62-amino-acid polypeptide reads, in one-letter code: Large ribosomal subunit protein bL28 (62 aa).

The tract at residues methionine 1–arginine 23 is disordered.

Belongs to the bacterial ribosomal protein bL28 family.

This chain is Large ribosomal subunit protein bL28, found in Brevibacillus brevis (strain 47 / JCM 6285 / NBRC 100599).